The primary structure comprises 619 residues: Chaperone protein HscA homolog (619 aa).

It belongs to the heat shock protein 70 family.

Functionally, chaperone involved in the maturation of iron-sulfur cluster-containing proteins. Has a low intrinsic ATPase activity which is markedly stimulated by HscB. The chain is Chaperone protein HscA homolog from Acinetobacter baumannii (strain ACICU).